Reading from the N-terminus, the 98-residue chain is Putative defensin-like protein 239 (98 aa).

The signal sequence occupies residues 1–23; that stretch reads MRYTTSFIGLCFLIFLLKNLVNG. 4 disulfide bridges follow: Cys29/Cys89, Cys39/Cys69, Cys47/Cys86, and Cys67/Cys88.

Belongs to the DEFL family.

Its subcellular location is the secreted. In Arabidopsis thaliana (Mouse-ear cress), this protein is Putative defensin-like protein 239 (SCRL17).